The sequence spans 329 residues: Prostaglandin reductase 1 (329 aa).

Residue T18 is modified to Phosphothreonine. A Phosphoserine modification is found at S20. NADP(+)-binding positions include 152 to 155, K178, Y193, N217, 239 to 245, 270 to 272, and N321; these read GAVG, CGAISTY, and FIV. The residue at position 178 (K178) is an N6-(2-hydroxyisobutyryl)lysine; alternate. K178 bears the N6-acetyllysine; alternate mark.

It belongs to the NADP-dependent oxidoreductase L4BD family. In terms of assembly, monomer or homodimer. Ubiquitously distributed in various tissues and leukocytes, the kidney and liver had the highest enzyme activities.

It is found in the cytoplasm. It carries out the reaction 13,14-dihydro-15-oxo-prostaglandin E1 + NADP(+) = 15-oxoprostaglandin E1 + NADPH + H(+). It catalyses the reaction 13,14-dihydro-15-oxo-prostaglandin E2 + NADP(+) = 15-oxoprostaglandin E2 + NADPH + H(+). The enzyme catalyses 13,14-dihydro-15-oxo-prostaglandin E2 + NAD(+) = 15-oxoprostaglandin E2 + NADH + H(+). The catalysed reaction is 13,14-dihydro-15-oxo-prostaglandin F1alpha + NADP(+) = 15-oxoprostaglandin F1alpha + NADPH + H(+). It carries out the reaction 13,14-dihydro-15-oxo-PGF2alpha + NADP(+) = 15-oxoprostaglandin F2alpha + NADPH + H(+). It catalyses the reaction leukotriene B4 + NADP(+) = 12-oxo-leukotriene B4 + NADPH + H(+). The enzyme catalyses 20-hydroxy-leukotriene B4 + NADP(+) = 12-oxo-20-hydroxy-leukotriene B4 + NADPH + H(+). The catalysed reaction is 6-trans-leukotriene B4 + NADP(+) = 12-oxo-(5S)-hydroxy-(6E,8E,10E,14Z)-eicosatetraenoate + NADPH + H(+). It carries out the reaction (5S,12S)-dihydroxy-(6E,10E,12E,14Z)-eicosatetraenoate + NADP(+) = 12-oxo-(5S)-hydroxy-(6E,8E,10E,14Z)-eicosatetraenoate + NADPH + H(+). It catalyses the reaction 15-oxo-(5S,6R)-dihydroxy-(7E,9E,11Z,13E)-eicosatetraenoate + NADH + H(+) = 15-oxo-(5S,6R)-dihydroxy-(7E,9E,11Z)-eicosatrienoate + NAD(+). The enzyme catalyses an n-alkanal + NADP(+) = an alk-2-enal + NADPH + H(+). The catalysed reaction is hexanal + NADP(+) = (E)-hex-2-enal + NADPH + H(+). It carries out the reaction octanal + NADP(+) = (2E)-octenal + NADPH + H(+). It catalyses the reaction decanal + NADP(+) = (2E)-decenal + NADPH + H(+). The enzyme catalyses dodecanal + NADP(+) = (2E)-dodecenal + NADPH + H(+). The catalysed reaction is 4-hydroxynonanal + NADP(+) = (E)-4-hydroxynon-2-enal + NADPH + H(+). It carries out the reaction pentan-2-one + NADP(+) = (E)-pent-3-en-2-one + NADPH + H(+). It catalyses the reaction nonan-2-one + NADP(+) = (3E)-nonen-2-one + NADPH + H(+). With respect to regulation, down-regulated by nonsteroidal anti-inflammatory drugs diclofenac, indomethacin and niflumic acid. Functionally, NAD(P)H-dependent oxidoreductase involved in metabolic inactivation of pro- and anti-inflammatory eicosanoids: prostaglandins (PG), leukotrienes (LT) and lipoxins (LX). Preferentially uses NADPH over NADH as cofactor. Catalyzes with high efficiency the reduction of the 13,14 double bond of 15-oxoPGs, including 15-oxo-PGE1, 15-oxo-PGE2, 15-oxo-PGF1-alpha and 15-oxo-PGF2-alpha. Catalyzes with lower efficiency the oxidation of the hydroxyl group at C12 of LTB4 and its derivatives, converting them into biologically less active 12-oxo-LTB4 metabolites. Reduces 15-oxo-LXA4 to 13,14 dihydro-15-oxo-LXA4 and may promote neutrophil recruitment at the inflammatory site. Plays a role in metabolic detoxification of alkenals and ketones. Reduces alpha,beta-unsaturated alkenals and ketones, particularly those with medium-chain length, showing highest affinity toward (2E)-decenal and (3E)-3-nonen-2-one. May inactivate 4-hydroxy-2-nonenal, a cytotoxic lipid constituent of oxidized low-density lipoprotein particles. The sequence is that of Prostaglandin reductase 1 (PTGR1) from Sus scrofa (Pig).